The sequence spans 709 residues: MGCVNSKQTVSVTPAIDHSGVFRDNVCSGSGRIVVEDLPPVTETKLLSWWSKSGKKSSSKKSGSELGSDFGELSESGRASSNCRSESVSFRLGNLSKYLEAEQVAAGWPAWLSNVAGEAIHGWVPFRSDAFEKLEKIGQGTYSSVFRARETETGRIVALKKVRFDNFEPESVRFMAREILILRKLNHPNIIKLEGIVTSKLSCSIHLVFEYMEHDLTGLLSSPDIDFTTPQIKCYMKQLLSGLDHCHARGVMHRDIKGSNLLVNNEGILKVADFGLANFCNASGNKQPLTSRVVTLWYRPPELLLGATEYGASVDLWSVGCVFAELLIGKPVLQGRTEVEQLHKIFKLCGSPPEDYWKKSKLPHAMLFKPQQHYDGCLRETLKLKGLSDADINLIETLLSIQPHKRGTASTALVSQYFTSKPFACDPSSLPVYSPSKEIDAKHREDTTRKKISGNGRRGTESRKPTRKPPAFAKLAPAEDVRHHSQKFQKRNGHSVHNSIDSDSTLFEKMQKPSNHEKDEASHVKNASQGDVPFSGPLQVSVSSGFAWAKRRKDDICVRSHNRSLSRGHIPNLLGPSPAFSENTDVDSKNNEKEKEEKHGERTDSQDREAYEMLKLSMLKKWRQLERPDSFGGSDEYHSQELSLELYQREEKAAKLGHLGYEDNDEKIEFSGPLLSKSYGVDELLERHERQIRQLVRKSWFQKGKKQGK.

Gly2 carries N-myristoyl glycine lipidation. Positions Ser53–Ser80 are disordered. A Protein kinase domain is found at Phe131 to Phe418. Residues Ile137–Val145 and Lys160 contribute to the ATP site. The active-site Proton acceptor is the Asp255. Disordered stretches follow at residues Ser434–Gly536 and Ser566–Glu609. Positions Lys437–Arg449 are enriched in basic and acidic residues. The span at His484 to His494 shows a compositional bias: basic residues. Positions Ser495–Thr505 are enriched in polar residues. Basic and acidic residues-rich tracts occupy residues Lys509–His523 and Val586–Glu609.

It belongs to the protein kinase superfamily. Ser/Thr protein kinase family.

Functionally, required for beta-aminobutyric acid (BABA)-induced resistance (BABA-IR) against bacteria (e.g. P.syringae) and oomycetes (e.g. H.parasitica) via priming for salicylate (SA)-dependent defense responses such as pathogenesis-related PR-1 gene expression and trailing necrosis. Involved in BABA-mediated sterility. Necessary for the inheritance of BABA-priming to next generation, especially for the primed to be primed phenotype which consists in an enhanced second BABA-priming in transgenerationally primed plants. This Arabidopsis thaliana (Mouse-ear cress) protein is Protein IMPAIRED IN BABA-INDUCED STERILITY 1.